A 178-amino-acid chain; its full sequence is ATP synthase subunit delta (178 aa).

The protein belongs to the ATPase delta chain family. As to quaternary structure, F-type ATPases have 2 components, F(1) - the catalytic core - and F(0) - the membrane proton channel. F(1) has five subunits: alpha(3), beta(3), gamma(1), delta(1), epsilon(1). F(0) has three main subunits: a(1), b(2) and c(10-14). The alpha and beta chains form an alternating ring which encloses part of the gamma chain. F(1) is attached to F(0) by a central stalk formed by the gamma and epsilon chains, while a peripheral stalk is formed by the delta and b chains.

The protein localises to the cell membrane. In terms of biological role, f(1)F(0) ATP synthase produces ATP from ADP in the presence of a proton or sodium gradient. F-type ATPases consist of two structural domains, F(1) containing the extramembraneous catalytic core and F(0) containing the membrane proton channel, linked together by a central stalk and a peripheral stalk. During catalysis, ATP synthesis in the catalytic domain of F(1) is coupled via a rotary mechanism of the central stalk subunits to proton translocation. This protein is part of the stalk that links CF(0) to CF(1). It either transmits conformational changes from CF(0) to CF(1) or is implicated in proton conduction. The polypeptide is ATP synthase subunit delta (Streptococcus pyogenes serotype M1).